Here is a 405-residue protein sequence, read N- to C-terminus: Probable succinyl-diaminopimelate desuccinylase (405 aa).

Histidine 72 lines the Zn(2+) pocket. Residue aspartate 74 is part of the active site. Aspartate 105 is a binding site for Zn(2+). Glutamate 139 (proton acceptor) is an active-site residue. 3 residues coordinate Zn(2+): glutamate 140, glutamate 165, and histidine 377.

Belongs to the peptidase M20A family. Zn(2+) is required as a cofactor. Co(2+) serves as cofactor.

It catalyses the reaction N-succinyl-(2S,6S)-2,6-diaminopimelate + H2O = (2S,6S)-2,6-diaminopimelate + succinate. It participates in amino-acid biosynthesis; L-lysine biosynthesis via DAP pathway; LL-2,6-diaminopimelate from (S)-tetrahydrodipicolinate (succinylase route): step 3/3. The chain is Probable succinyl-diaminopimelate desuccinylase (dapE) from Staphylococcus epidermidis (strain ATCC 12228 / FDA PCI 1200).